Here is a 332-residue protein sequence, read N- to C-terminus: Phosphoenolpyruvate transferase (332 aa).

7,8-didemethyl-8-hydroxy-5-deazariboflavin is bound at residue aspartate 63.

This sequence belongs to the CofD family. As to quaternary structure, homodimer. Requires Mg(2+) as cofactor.

It catalyses the reaction enolpyruvoyl-2-diphospho-5'-guanosine + 7,8-didemethyl-8-hydroxy-5-deazariboflavin = dehydro coenzyme F420-0 + GMP + H(+). The protein operates within cofactor biosynthesis; coenzyme F420 biosynthesis. In terms of biological role, catalyzes the transfer of the phosphoenolpyruvate moiety from enoylpyruvoyl-2-diphospho-5'-guanosine (EPPG) to 7,8-didemethyl-8-hydroxy-5-deazariboflavin (FO) with the formation of dehydro coenzyme F420-0 and GMP. In Nocardia farcinica (strain IFM 10152), this protein is Phosphoenolpyruvate transferase.